A 275-amino-acid chain; its full sequence is U6 snRNA phosphodiesterase 1 (275 aa).

The segment at 1–25 (MEFLKHYEDDEDQDDENNTKDENVN) is disordered. Catalysis depends on His-122, which acts as the Proton acceptor. Residues 122–124 (HIS), Tyr-206, and 208–214 (NPEPHLS) contribute to the AMP site. Residues Tyr-206 and 210–214 (EPHLS) contribute to the UMP site. Catalysis depends on His-212, which acts as the Proton donor.

Belongs to the 2H phosphoesterase superfamily. USB1 family.

It localises to the nucleus. The catalysed reaction is a 3'-end uridylyl-uridine-RNA = a 3'-end 2',3'-cyclophospho-uridine-RNA + uridine. In terms of biological role, 3'-5' RNA exonuclease that trims the 3' end of oligo(U) tracts of the pre-U6 small nuclear RNA (snRNA) molecule, leading to the formation of a mature U6 snRNA 3' end-terminated with a 2',3'-cyclic phosphate. Participates in the U6 snRNA 3' end processing that prevents U6 snRNA degradation. In Dictyostelium discoideum (Social amoeba), this protein is U6 snRNA phosphodiesterase 1.